The chain runs to 297 residues: Streptogrisin-A (297 aa).

Positions 1-38 are cleaved as a signal peptide; sequence MTFKRFSPLSSTSRYARLLAVASGLVAAAALATPSAVA. Residues 39-115 constitute a propeptide that is removed on maturation; that stretch reads APEAESKATV…VKRAEGKFTP (77 aa). A disulfide bond links cysteine 130 and cysteine 150. Active-site charge relay system residues include histidine 149, aspartate 171, and serine 253. Cysteine 247 and cysteine 274 form a disulfide bridge.

This sequence belongs to the peptidase S1 family. As to quaternary structure, monomer.

The enzyme catalyses Hydrolysis of proteins with specificity similar to chymotrypsin.. In terms of biological role, has a primary specificity for large aliphatic or aromatic amino acids. The protein is Streptogrisin-A (sprA) of Streptomyces griseus.